The chain runs to 75 residues: CLAVATA3/ESR (CLE)-related protein 2 (75 aa).

A signal peptide spans 1 to 22 (MAKLSFTFCFLLFLLLSSIAAG). The tract at residues 40-75 (PSIEATSPTVEDDQAAGSHGKSPERLSPGGPDPQHH) is disordered. P67 and P70 each carry hydroxyproline. An O-linked (Ara...) hydroxyproline glycan is attached at P70.

This sequence belongs to the CLV3/ESR signal peptide family. As to quaternary structure, interacts with the extracellular leucine-rich repeat region of CLV1. The O-glycosylation (arabinosylation) of the hydroxyproline Pro-70 enhances binding affinity of the CLE2p peptide for its receptor. Mostly expressed in roots and seedlings, and, to a lower extent, in apex.

The protein localises to the secreted. The protein resides in the extracellular space. Extracellular signal peptide that regulates cell fate. May act with CLV1 as a ligand-receptor pair in a signal transduction pathway, coordinating growth between adjacent meristematic regions. The protein is CLAVATA3/ESR (CLE)-related protein 2 of Arabidopsis thaliana (Mouse-ear cress).